The primary structure comprises 256 residues: uncharacterized protein (256 aa).

The first 24 residues, 1–24 (MIKRVNKLVLGISLLFLVISIAAG), serve as a signal peptide directing secretion. Residue Cys-25 is the site of N-palmitoyl cysteine attachment. The S-diacylglycerol cysteine moiety is linked to residue Cys-25.

This sequence belongs to the staphylococcal tandem lipoprotein family.

The protein localises to the cell membrane. This is an uncharacterized protein from Staphylococcus aureus.